The following is a 952-amino-acid chain: ALS2 C-terminal-like protein (952 aa).

8 MORN repeats span residues 358-380 (YDGEWCRAKPHGKGTLKWPDGRN), 381-403 (HVGTFYQGLEHGFGICLVPQASE), 409-431 (YKCHWREGRMCEYGICEYGTDEV), 432-454 (YKGYFQAGLRHGFGILESAPQAP), 459-481 (YTGHWERGQRSGYGIEEDRDRGE), 483-505 (YIGMWQADQRHGPGVVVTQAGVC), 506-528 (YQGTFQGDKMAGPGILLCEDDSL), and 529-552 (YEGTFTRDLTLLGKGKVTFPNGFT). Residues 795-941 (LFPDTKLLEF…IQKEDMRPHH (147 aa)) enclose the VPS9 domain.

In terms of assembly, homodimer. Forms a heteromeric complex with ALS2. Interacts with ALS2 and RAB5A. In terms of tissue distribution, expressed in heart, lung, liver and kidney.

The protein localises to the cytoplasm. In terms of biological role, acts as a guanine nucleotide exchange factor (GEF) for Rab5 GTPase. Regulates the ALS2-mediated endosome dynamics. The protein is ALS2 C-terminal-like protein (Als2cl) of Mus musculus (Mouse).